Consider the following 102-residue polypeptide: Iron-sulfur cluster assembly protein CyaY (102 aa).

Belongs to the frataxin family.

Functionally, involved in iron-sulfur (Fe-S) cluster assembly. May act as a regulator of Fe-S biogenesis. The chain is Iron-sulfur cluster assembly protein CyaY from Mannheimia succiniciproducens (strain KCTC 0769BP / MBEL55E).